Reading from the N-terminus, the 466-residue chain is Phosphoenolpyruvate carboxykinase (ATP) (466 aa).

The substrate site is built by arginine 61, tyrosine 196, and lysine 202. Residues lysine 202, histidine 221, and 237-245 contribute to the ATP site; that span reads GLSGTGKTT. Lysine 202 and histidine 221 together coordinate Mn(2+). Aspartate 258 provides a ligand contact to Mn(2+). Glutamate 286, arginine 323, and threonine 448 together coordinate ATP. Arginine 323 is a substrate binding site.

The protein belongs to the phosphoenolpyruvate carboxykinase (ATP) family. It depends on Mn(2+) as a cofactor.

Its subcellular location is the cytoplasm. The enzyme catalyses oxaloacetate + ATP = phosphoenolpyruvate + ADP + CO2. It participates in carbohydrate biosynthesis; gluconeogenesis. Its function is as follows. Involved in the gluconeogenesis. Catalyzes the conversion of oxaloacetate (OAA) to phosphoenolpyruvate (PEP) through direct phosphoryl transfer between the nucleoside triphosphate and OAA. This Deinococcus radiodurans (strain ATCC 13939 / DSM 20539 / JCM 16871 / CCUG 27074 / LMG 4051 / NBRC 15346 / NCIMB 9279 / VKM B-1422 / R1) protein is Phosphoenolpyruvate carboxykinase (ATP).